A 363-amino-acid chain; its full sequence is 3-isopropylmalate dehydrogenase (363 aa).

Residue Gly-78–Glu-91 participates in NAD(+) binding. Arg-99, Arg-109, Arg-138, and Asp-227 together coordinate substrate. Mg(2+) is bound by residues Asp-227, Asp-251, and Asp-255. Gly-285–Asn-297 lines the NAD(+) pocket.

It belongs to the isocitrate and isopropylmalate dehydrogenases family. LeuB type 1 subfamily. In terms of assembly, homodimer. The cofactor is Mg(2+). Mn(2+) serves as cofactor.

It is found in the cytoplasm. It carries out the reaction (2R,3S)-3-isopropylmalate + NAD(+) = 4-methyl-2-oxopentanoate + CO2 + NADH. It functions in the pathway amino-acid biosynthesis; L-leucine biosynthesis; L-leucine from 3-methyl-2-oxobutanoate: step 3/4. In terms of biological role, catalyzes the oxidation of 3-carboxy-2-hydroxy-4-methylpentanoate (3-isopropylmalate) to 3-carboxy-4-methyl-2-oxopentanoate. The product decarboxylates to 4-methyl-2 oxopentanoate. In Salmonella choleraesuis (strain SC-B67), this protein is 3-isopropylmalate dehydrogenase.